The sequence spans 297 residues: 4-hydroxy-tetrahydrodipicolinate synthase (297 aa).

Position 46 (threonine 46) interacts with pyruvate. Tyrosine 134 acts as the Proton donor/acceptor in catalysis. The active-site Schiff-base intermediate with substrate is lysine 163. A pyruvate-binding site is contributed by isoleucine 205.

The protein belongs to the DapA family. As to quaternary structure, homotetramer; dimer of dimers.

Its subcellular location is the cytoplasm. It carries out the reaction L-aspartate 4-semialdehyde + pyruvate = (2S,4S)-4-hydroxy-2,3,4,5-tetrahydrodipicolinate + H2O + H(+). It participates in amino-acid biosynthesis; L-lysine biosynthesis via DAP pathway; (S)-tetrahydrodipicolinate from L-aspartate: step 3/4. Functionally, catalyzes the condensation of (S)-aspartate-beta-semialdehyde [(S)-ASA] and pyruvate to 4-hydroxy-tetrahydrodipicolinate (HTPA). This chain is 4-hydroxy-tetrahydrodipicolinate synthase, found in Thermoanaerobacter pseudethanolicus (strain ATCC 33223 / 39E) (Clostridium thermohydrosulfuricum).